A 313-amino-acid chain; its full sequence is GTP cyclohydrolase MptA (313 aa).

The protein belongs to the GTP cyclohydrolase IV family. As to quaternary structure, homodimer. Fe(2+) is required as a cofactor.

The enzyme catalyses GTP + H2O = 7,8-dihydroneopterin 2',3'-cyclic phosphate + formate + diphosphate + H(+). The protein operates within cofactor biosynthesis; 5,6,7,8-tetrahydromethanopterin biosynthesis. Converts GTP to 7,8-dihydro-D-neopterin 2',3'-cyclic phosphate, the first intermediate in the biosynthesis of coenzyme methanopterin. This is GTP cyclohydrolase MptA from Methanoculleus marisnigri (strain ATCC 35101 / DSM 1498 / JR1).